Consider the following 3166-residue polypeptide: Intermembrane lipid transfer protein VPS13A (3166 aa).

The Chorein N-terminal domain maps to 3 to 116 (FESVVVEVLN…LMETKQQELK (114 aa)). 2 TPR repeats span residues 212–245 (LFAYWNVNSEMFYLNDYDESLKALKNGIVNENIV) and 373–406 (LTSKKPSPEILMSLEELEKTLDVFNITIARQQAE). Phosphothreonine is present on Thr-831. Phosphoserine is present on Ser-835. The short motif at 838 to 844 (EFFDAPC) is the FFAT element. Polar residues predominate over residues 1343-1359 (APSSANKDPETMTSGVT). The interval 1343–1365 (APSSANKDPETMTSGVTSPPDHS) is disordered. Ser-1410 carries the post-translational modification Phosphoserine. 2 TPR repeats span residues 1806–1840 (AIVESDSEAENYKVPEYKTAISFYSRDQLNITLSK) and 1999–2034 (ISVFEGDTLLGIASPENEFNIPLASYRSSLSLVPED). The region spanning 2202 to 2447 (VAFHSPYWMV…VYYTWADPVG (246 aa)) is the SHR-BD domain. Required for mitochondrial localization regions lie at residues 2607–3166 (LQPH…SPRL) and 2743–3166 (EYEV…SPRL). TPR repeat units lie at residues 2716–2750 (ADLVTKAEVTEKTEVEHFHKDVEAFEQEYEVVSSV) and 2852–2890 (ILGLDVLGNPFGLIREFSEGVEAFFYEPYQGAIQGPEEF). The required for lipid droplet localization stretch occupies residues 2945–3019 (PAGLREGITR…SSTFQGIKRA (75 aa)).

This sequence belongs to the VPS13 family. Interacts (via FFAT motif) with VAPA and VAPB. Interacts with RAB7A. Interacts with XK.

The protein localises to the mitochondrion outer membrane. It is found in the endoplasmic reticulum membrane. Its subcellular location is the endosome membrane. It localises to the lysosome membrane. The protein resides in the lipid droplet. The protein localises to the golgi apparatus. It is found in the cytoplasmic vesicle. Its subcellular location is the secretory vesicle. It localises to the neuronal dense core vesicle. Its function is as follows. Mediates the transfer of lipids between membranes at organelle contact sites. Required for the formation or stabilization of ER-mitochondria contact sites which enable transfer of lipids between the ER and mitochondria. Negatively regulates lipid droplet size and motility. Required for efficient lysosomal protein degradation. The polypeptide is Intermembrane lipid transfer protein VPS13A (Mus musculus (Mouse)).